The following is a 218-amino-acid chain: Small ribosomal subunit protein uS3 (218 aa).

Residues 38 to 107 form the KH type-2 domain; the sequence is VREYIEKRLK…RVHVNVVEVK (70 aa).

It belongs to the universal ribosomal protein uS3 family. In terms of assembly, part of the 30S ribosomal subunit. Forms a tight complex with proteins S10 and S14.

In terms of biological role, binds the lower part of the 30S subunit head. Binds mRNA in the 70S ribosome, positioning it for translation. This Exiguobacterium sibiricum (strain DSM 17290 / CCUG 55495 / CIP 109462 / JCM 13490 / 255-15) protein is Small ribosomal subunit protein uS3.